Here is a 140-residue protein sequence, read N- to C-terminus: Nucleoside diphosphate kinase (140 aa).

Lys11, Phe59, Arg87, Thr93, Arg104, and Asn114 together coordinate ATP. The Pros-phosphohistidine intermediate role is filled by His117.

Belongs to the NDK family. In terms of assembly, homotetramer. Mg(2+) serves as cofactor.

The protein localises to the cytoplasm. The catalysed reaction is a 2'-deoxyribonucleoside 5'-diphosphate + ATP = a 2'-deoxyribonucleoside 5'-triphosphate + ADP. It catalyses the reaction a ribonucleoside 5'-diphosphate + ATP = a ribonucleoside 5'-triphosphate + ADP. Functionally, major role in the synthesis of nucleoside triphosphates other than ATP. The ATP gamma phosphate is transferred to the NDP beta phosphate via a ping-pong mechanism, using a phosphorylated active-site intermediate. This Novosphingobium aromaticivorans (strain ATCC 700278 / DSM 12444 / CCUG 56034 / CIP 105152 / NBRC 16084 / F199) protein is Nucleoside diphosphate kinase.